A 592-amino-acid chain; its full sequence is Arginine--tRNA ligase (592 aa).

Positions 134 to 144 (ANPTGPLHVGH) match the 'HIGH' region motif.

This sequence belongs to the class-I aminoacyl-tRNA synthetase family. In terms of assembly, monomer.

It localises to the cytoplasm. The enzyme catalyses tRNA(Arg) + L-arginine + ATP = L-arginyl-tRNA(Arg) + AMP + diphosphate. The chain is Arginine--tRNA ligase from Coxiella burnetii (strain CbuK_Q154) (Coxiella burnetii (strain Q154)).